The sequence spans 253 residues: MLKTRIIPCLDVADGRVVKGVNFVGLRDAGDPVDAARAYDAAGADEICFLDIHATHENRGTMFDVVSRTAEQCFVPLTVGGGVRTHADVRALLLAGADKVSFNSAAVANPDVIAEAADRFGSQCIVCAIDAKTVEPGRWEIFTHGGRKPTGIDAVEFARLVTAKGAGEILLTSMDRDGTKSGFNLPLTRAIADAVDVPVIASGGVGTLDHLVEGVTEGHASAVLAASIFHFGEYTIREAKEHMAAAGIPMRLT.

Residues Asp11 and Asp130 contribute to the active site.

Belongs to the HisA/HisF family. In terms of assembly, heterodimer of HisH and HisF.

It localises to the cytoplasm. It catalyses the reaction 5-[(5-phospho-1-deoxy-D-ribulos-1-ylimino)methylamino]-1-(5-phospho-beta-D-ribosyl)imidazole-4-carboxamide + L-glutamine = D-erythro-1-(imidazol-4-yl)glycerol 3-phosphate + 5-amino-1-(5-phospho-beta-D-ribosyl)imidazole-4-carboxamide + L-glutamate + H(+). Its pathway is amino-acid biosynthesis; L-histidine biosynthesis; L-histidine from 5-phospho-alpha-D-ribose 1-diphosphate: step 5/9. IGPS catalyzes the conversion of PRFAR and glutamine to IGP, AICAR and glutamate. The HisF subunit catalyzes the cyclization activity that produces IGP and AICAR from PRFAR using the ammonia provided by the HisH subunit. This is Imidazole glycerol phosphate synthase subunit HisF from Ruegeria pomeroyi (strain ATCC 700808 / DSM 15171 / DSS-3) (Silicibacter pomeroyi).